Reading from the N-terminus, the 391-residue chain is Elongation factor Tu (391 aa).

The region spanning 10 to 201 (KPHVNIGTIG…EVDNYIPTPE (192 aa)) is the tr-type G domain. Residues 19–26 (GHVDHGKT) are G1. Residue 19–26 (GHVDHGKT) coordinates GTP. Thr-26 is a binding site for Mg(2+). The segment at 55-59 (GITIS) is G2. Positions 76-79 (DCPG) are G3. Residues 76 to 80 (DCPGH) and 131 to 134 (NKVD) each bind GTP. A G4 region spans residues 131 to 134 (NKVD). A G5 region spans residues 169–171 (SAL).

This sequence belongs to the TRAFAC class translation factor GTPase superfamily. Classic translation factor GTPase family. EF-Tu/EF-1A subfamily. As to quaternary structure, monomer.

Its subcellular location is the cytoplasm. The catalysed reaction is GTP + H2O = GDP + phosphate + H(+). In terms of biological role, GTP hydrolase that promotes the GTP-dependent binding of aminoacyl-tRNA to the A-site of ribosomes during protein biosynthesis. In Bartonella henselae (strain ATCC 49882 / DSM 28221 / CCUG 30454 / Houston 1) (Rochalimaea henselae), this protein is Elongation factor Tu.